A 376-amino-acid chain; its full sequence is Actin-related protein T1 (376 aa).

This sequence belongs to the actin family. In skin, expressed in the basal, spinous and granular layers of the epidermis. Also expressed in hair follicles, sebaceaous glands, eccrine sweat glands and semen.

It localises to the cytoplasm. Its subcellular location is the cytoskeleton. It is found in the nucleus. The protein resides in the cytoplasmic vesicle. The protein localises to the secretory vesicle. It localises to the acrosome. Its function is as follows. Negatively regulates the Hedgehog (SHH) signaling. Binds to the promoter of the SHH signaling mediator, GLI1, and inhibits its expression. The sequence is that of Actin-related protein T1 from Homo sapiens (Human).